The chain runs to 406 residues: Olfactomedin-like protein 3 (406 aa).

Positions 1–21 are cleaved as a signal peptide; sequence MGPSAPLLLLFFLSWTGPLQG. Residues 25-101 are a coiled coil; that stretch reads HLVEYMERRL…REVDYLETQN (77 aa). In terms of domain architecture, Olfactomedin-like spans 134–401; it reads DCSYTVAQVR…QIVYKLEMKK (268 aa). C135 and C328 form a disulfide bridge. Residues N177 and N248 are each glycosylated (N-linked (GlcNAc...) asparagine).

Belongs to the OLFML3 family.

Its subcellular location is the secreted. Its function is as follows. Secreted scaffold protein that plays an essential role in dorsoventral patterning during early development. Stabilizes axial formation by restricting chordin (CHRD) activity on the dorsal side. Acts by facilitating the association between the tolloid proteases and their substrate chordin (CHRD), leading to enhance chordin (CHRD) degradation. May have matrix-related function involved in placental and embryonic development, or play a similar role in other physiological processes. This is Olfactomedin-like protein 3 (Olfml3) from Mus musculus (Mouse).